The chain runs to 64 residues: Phylloxin-B1 (64 aa).

An N-terminal signal peptide occupies residues 1–22 (MVFLKKSLLLVLFVGLVSLSIC). A propeptide spanning residues 23-42 (EENKREEHEEIEENKEKAEE) is cleaved from the precursor. Glutamine amide is present on glutamine 63.

As to expression, expressed by the skin glands.

It is found in the secreted. In terms of biological role, antimicrobial peptide against the wall-less bacteria A.laidlawii and S.melliferum, the Gram-positive bacteria B.megaterium KM, C.glutamicum ATCC 27853 and M.luteus ATCC 27853 and the Gram-negative-bacteria R.meliloti 102F34 and E.coli K12. This is Phylloxin-B1 from Phyllomedusa bicolor (Two-colored leaf frog).